Here is a 971-residue protein sequence, read N- to C-terminus: 116 kDa U5 small nuclear ribonucleoprotein component (971 aa).

At methionine 1 the chain carries N-acetylmethionine. The disordered stretch occupies residues 1 to 52 (MDTDLYDEFGNYIGPELDSDEDDDELGRETKDLDEDEDEDEDDVGEHEDDHP). Positions 17–47 (LDSDEDDDELGRETKDLDEDEDEDEDDVGEH) are enriched in acidic residues. Phosphoserine is present on serine 19. A Glycyl lysine isopeptide (Lys-Gly) (interchain with G-Cter in SUMO1); alternate cross-link involves residue lysine 63. Lysine 63 is covalently cross-linked (Glycyl lysine isopeptide (Lys-Gly) (interchain with G-Cter in SUMO2); alternate). The residue at position 85 (threonine 85) is a Phosphothreonine. The tr-type G domain occupies 126–408 (ELIRNVTLCG…GIHLTKEELK (283 aa)). Residues 135 to 142 (GHLHHGKT), 203 to 207 (DTPGH), and 257 to 260 (NKID) contribute to the GTP site.

Belongs to the TRAFAC class translation factor GTPase superfamily. Classic translation factor GTPase family. EF-G/EF-2 subfamily. As to quaternary structure, component of the U5 snRNP and the U4/U6-U5 tri-snRNP complex, a building block of the spliceosome. The U4/U6-U5 tri-snRNP complex is composed of the U4, U6 and U5 snRNAs and at least PRPF3, PRPF4, PRPF6, PRPF8, PRPF31, SNRNP200, TXNL4A, SNRNP40, DDX23, CD2BP2, PPIH, SNU13, EFTUD2, SART1 and USP39. Component of the pre-catalytic, catalytic and post-catalytic spliceosome complexes. Component of the minor spliceosome, which splices U12-type introns. Within this complex, interacts with CRIPT. Interacts with ERBB4 and PRPF8. Interacts with PIH1D1. Interacts with RPAP3 and URI1 in a ZNHIT2-dependent manner. Interacts with NRDE2. Interacts with FAM50A. Interacts with UBL5.

The protein resides in the nucleus. Required for pre-mRNA splicing as component of the spliceosome, including pre-catalytic, catalytic and post-catalytic spliceosomal complexes. Component of the U5 snRNP and the U4/U6-U5 tri-snRNP complex, a building block of the spliceosome. As a component of the minor spliceosome, involved in the splicing of U12-type introns in pre-mRNAs. The protein is 116 kDa U5 small nuclear ribonucleoprotein component (Eftud2) of Mus musculus (Mouse).